Consider the following 369-residue polypeptide: Glutamate 5-kinase (369 aa).

Lys-9 is a binding site for ATP. Ser-49, Asp-136, and Asn-148 together coordinate substrate. ATP is bound by residues 168 to 169 (TD) and 210 to 216 (TGGMLTK). In terms of domain architecture, PUA spans 275-355 (QGSIWVDKGA…KGVLIYRDDW (81 aa)).

This sequence belongs to the glutamate 5-kinase family.

It is found in the cytoplasm. The enzyme catalyses L-glutamate + ATP = L-glutamyl 5-phosphate + ADP. Its pathway is amino-acid biosynthesis; L-proline biosynthesis; L-glutamate 5-semialdehyde from L-glutamate: step 1/2. Catalyzes the transfer of a phosphate group to glutamate to form L-glutamate 5-phosphate. This is Glutamate 5-kinase from Streptococcus pneumoniae serotype 4 (strain ATCC BAA-334 / TIGR4).